We begin with the raw amino-acid sequence, 380 residues long: Cytochrome b (380 aa).

The next 4 helical transmembrane spans lie at 34 to 54 (FGSL…LLAT), 78 to 99 (WLIR…YLHI), 114 to 134 (WNTG…GYVL), and 179 to 199 (FFAL…IHLT). The heme b site is built by H84 and H98. Heme b contacts are provided by H183 and H197. Residue H202 participates in a ubiquinone binding. Helical transmembrane passes span 227–247 (LKDI…ALFS), 289–309 (LGGV…PLLH), 321–341 (FSQF…WVGS), and 348–368 (FIII…LLFP).

The protein belongs to the cytochrome b family. The cytochrome bc1 complex contains 11 subunits: 3 respiratory subunits (MT-CYB, CYC1 and UQCRFS1), 2 core proteins (UQCRC1 and UQCRC2) and 6 low-molecular weight proteins (UQCRH/QCR6, UQCRB/QCR7, UQCRQ/QCR8, UQCR10/QCR9, UQCR11/QCR10 and a cleavage product of UQCRFS1). This cytochrome bc1 complex then forms a dimer. Requires heme b as cofactor.

It localises to the mitochondrion inner membrane. In terms of biological role, component of the ubiquinol-cytochrome c reductase complex (complex III or cytochrome b-c1 complex) that is part of the mitochondrial respiratory chain. The b-c1 complex mediates electron transfer from ubiquinol to cytochrome c. Contributes to the generation of a proton gradient across the mitochondrial membrane that is then used for ATP synthesis. The protein is Cytochrome b (MT-CYB) of Alca torda (Razorbill).